Here is a 464-residue protein sequence, read N- to C-terminus: L-cystine uptake protein TcyP (464 aa).

Helical transmembrane passes span 3–23 (TLLVGINVAVMLILVGVLYYM), 34–54 (VFTALGVGIIFGLILQFIYEP), 73–93 (YVKLLQMIVMPLILVSIISAF), 107–127 (GLIIGILILTTGIAAAVGIAA), 184–204 (PTSTISVVIFAAFIGIAFIGV), 225–245 (IVMRMVTLILRLTPYGVLALM), 263–283 (FVLASYVALIVMFVIHLLLIA), 347–367 (AGIYPAMLAMMVAPTVGIDPL), 371–391 (FILTLIAVVAISSFGVAGVGG), and 395–415 (FAALIVLSTMNLPIGIVALVI).

The protein belongs to the dicarboxylate/amino acid:cation symporter (DAACS) (TC 2.A.23) family.

The protein localises to the membrane. Its function is as follows. Mediates uptake of L-cystine, the oxidized form of L-cysteine. This chain is L-cystine uptake protein TcyP, found in Bacillus cereus (strain ATCC 10987 / NRS 248).